A 255-amino-acid chain; its full sequence is Proliferating cell nuclear antigen 2 (255 aa).

The DNA-binding element occupies H61–K80.

It belongs to the PCNA family. As to quaternary structure, homotrimer. Interacts with the catalytic subunits of two DNA polymerase complexes: PolD1 in the delta complex and PolE1/DNApol-epsilon255 in the epsilon complex.

It is found in the nucleus. The protein resides in the chromosome. It localises to the cytoplasm. In terms of biological role, likely to be an auxiliary protein of DNA polymerase delta complex and is probably involved in the control of DNA replication and repair by increasing the polymerase's processibility. May function independently of PCNA during DNA repair. This chain is Proliferating cell nuclear antigen 2, found in Drosophila melanogaster (Fruit fly).